The primary structure comprises 578 residues: Proteasome-associated ATPase (578 aa).

The stretch at 35 to 84 (RHLTALEEQLGAARTRLAQVSAQNDRLATTLREARDQIVALKAEVDRLGQ) forms a coiled coil. ATP is bound at residue 266-271 (GCGKTL). A docks into pockets in the proteasome alpha-ring region spans residues 577 to 578 (YL).

Belongs to the AAA ATPase family. In terms of assembly, homohexamer. Assembles into a hexameric ring structure that caps the 20S proteasome core. Strongly interacts with the prokaryotic ubiquitin-like protein Pup through a hydrophobic interface; the interacting region of ARC lies in its N-terminal coiled-coil domain. There is one Pup binding site per ARC hexamer ring. Upon ATP-binding, the C-terminus of ARC interacts with the alpha-rings of the proteasome core, possibly by binding to the intersubunit pockets.

It functions in the pathway protein degradation; proteasomal Pup-dependent pathway. Its function is as follows. ATPase which is responsible for recognizing, binding, unfolding and translocation of pupylated proteins into the bacterial 20S proteasome core particle. May be essential for opening the gate of the 20S proteasome via an interaction with its C-terminus, thereby allowing substrate entry and access to the site of proteolysis. Thus, the C-termini of the proteasomal ATPase may function like a 'key in a lock' to induce gate opening and therefore regulate proteolysis. The polypeptide is Proteasome-associated ATPase (Kineococcus radiotolerans (strain ATCC BAA-149 / DSM 14245 / SRS30216)).